The following is a 305-amino-acid chain: 4-diphosphocytidyl-2-C-methyl-D-erythritol kinase (305 aa).

K17 is an active-site residue. 111-121 (PVASGIGGGSA) lines the ATP pocket. The active site involves D154.

It belongs to the GHMP kinase family. IspE subfamily.

It carries out the reaction 4-CDP-2-C-methyl-D-erythritol + ATP = 4-CDP-2-C-methyl-D-erythritol 2-phosphate + ADP + H(+). It participates in isoprenoid biosynthesis; isopentenyl diphosphate biosynthesis via DXP pathway; isopentenyl diphosphate from 1-deoxy-D-xylulose 5-phosphate: step 3/6. Functionally, catalyzes the phosphorylation of the position 2 hydroxy group of 4-diphosphocytidyl-2C-methyl-D-erythritol. The protein is 4-diphosphocytidyl-2-C-methyl-D-erythritol kinase of Gluconacetobacter diazotrophicus (strain ATCC 49037 / DSM 5601 / CCUG 37298 / CIP 103539 / LMG 7603 / PAl5).